The sequence spans 2525 residues: Highly reducing polyketide synthase cm3B (2525 aa).

A compositionally biased stretch (polar residues) spans 1–10 (MQSDTNNSPL). The disordered stretch occupies residues 1-29 (MQSDTNNSPLSWEELRSGAASSDANSSPP). The 422-residue stretch at 29–450 (PEPIAIIGMS…GTNAHVVVDA (422 aa)) folds into the Ketosynthase family 3 (KS3) domain. Residues C202, H336, and H376 each act as for beta-ketoacyl synthase activity in the active site. The segment at 560–895 (VFSGQGSQYA…FLECLGALHV (336 aa)) is malonyl-CoA:ACP transacylase (MAT) domain. An N-terminal hotdog fold region spans residues 949–1087 (HELLGTFAHD…GLVHAETQAA (139 aa)). A dehydratase (DH) domain region spans residues 949 to 1252 (HELLGTFAHD…AKGVHTTTLP (304 aa)). The region spanning 949–1257 (HELLGTFAHD…TTTLPGDTGL (309 aa)) is the PKS/mFAS DH domain. H981 acts as the Proton acceptor; for dehydratase activity in catalysis. Residues 1107–1257 (VHEVTPQKLY…TTTLPGDTGL (151 aa)) are C-terminal hotdog fold. D1169 functions as the Proton donor; for dehydratase activity in the catalytic mechanism. The interval 1399 to 1504 (LEVGAGTASA…KKLLKPGGKF (106 aa)) is methyltransferase (CMet) domain. Residues 1799 to 2111 (GLLESIRWKD…AGKHTGKIVL (313 aa)) form an enoyl reductase (ER) domain region. A Carrier domain is found at 2411-2489 (AQLLENISQL…ELAKIIAKES (79 aa)). Residues 2411–2489 (AQLLENISQL…ELAKIIAKES (79 aa)) are ketoreductase (KR) domain. The residue at position 2449 (S2449) is an O-(pantetheine 4'-phosphoryl)serine.

The protein operates within secondary metabolite biosynthesis. Highly reducing polyketide synthase; part of the gene cluster that mediates the biosynthesis of beauveriolides I and III, cyclodepsipeptides acting as inhibitors of the acyl-CoA:cholesterol acyltransferase. The HR-PKS cm3B initiates the biosynthesis of beauveriolides by iteratively catalyzing the formation of the linear polyketide chain. The ATP-dependent acetyl-CoA ligase cm3D converts the polyketide carboxylic acid to a CoA thioester which id shuttled to the first T domain in the NRPS cm3A by the acetyltransferase cm3C. Cm3A contains 13 domains and assembles the polyketide chain, L-phenylalanine, L-alanine, and D-leucine (or D-allo-isoleucine) to form beauveriolide I (or beauveriolide III). The production of both beauveriolides I and III suggests the substrate adaptability of cm3B, using different amino acids as substrates. The polypeptide is Highly reducing polyketide synthase cm3B (Cordyceps militaris (strain CM01) (Caterpillar fungus)).